A 491-amino-acid polypeptide reads, in one-letter code: Probable malate:quinone oxidoreductase (491 aa).

It belongs to the MQO family. FAD is required as a cofactor.

It carries out the reaction (S)-malate + a quinone = a quinol + oxaloacetate. The protein operates within carbohydrate metabolism; tricarboxylic acid cycle; oxaloacetate from (S)-malate (quinone route): step 1/1. The polypeptide is Probable malate:quinone oxidoreductase (Leifsonia xyli subsp. xyli (strain CTCB07)).